The primary structure comprises 88 residues: Small ribosomal subunit protein uS19 (88 aa).

The protein belongs to the universal ribosomal protein uS19 family.

In terms of biological role, protein S19 forms a complex with S13 that binds strongly to the 16S ribosomal RNA. The sequence is that of Small ribosomal subunit protein uS19 (rpsS) from Chlamydia pneumoniae (Chlamydophila pneumoniae).